Here is a 176-residue protein sequence, read N- to C-terminus: Inorganic pyrophosphatase (176 aa).

Lys30, Arg44, and Tyr56 together coordinate substrate. Mg(2+)-binding residues include Asp66, Asp71, and Asp103. Residue Tyr142 participates in substrate binding.

This sequence belongs to the PPase family. As to quaternary structure, homohexamer. Mg(2+) is required as a cofactor.

Its subcellular location is the cytoplasm. The enzyme catalyses diphosphate + H2O = 2 phosphate + H(+). Its function is as follows. Catalyzes the hydrolysis of inorganic pyrophosphate (PPi) forming two phosphate ions. This Aeropyrum pernix (strain ATCC 700893 / DSM 11879 / JCM 9820 / NBRC 100138 / K1) protein is Inorganic pyrophosphatase.